A 475-amino-acid chain; its full sequence is F-box protein At3g59150 (475 aa).

An F-box domain is found at 12-58 (GDVISNLPNDLLCRILSYLSTKEAALTSILSKRWSNLLLSIPILDFD).

This is F-box protein At3g59150 from Arabidopsis thaliana (Mouse-ear cress).